Reading from the N-terminus, the 285-residue chain is MVAKILDGKQIAKDYRQGLKDQVEALQAEGYTPKLSVILVGNDGASQSYVNSKKKAAEKIGMISEIVHLDESTSEADVLNELKRLNEDDSVSGILVQVPLPDQVSEQKVLESINPAKDVDGFHPENIGKLYIDQQTFVPCTPLGIMELLNHADIDLEGKDAVVIGRSHIVGQPVSKLLLQKNASVTILHSRTKDMKRYLKNADIIVSAVGRPGLVTKEDVKEGAVVIDVGNTPDENGKLKGDIEYDEVKEVAGAITPVPGGVGPMTITMVLNNTLIAEKMRRGIE.

Residues 165-167 and S190 each bind NADP(+); that span reads GRS.

Belongs to the tetrahydrofolate dehydrogenase/cyclohydrolase family. Homodimer.

The catalysed reaction is (6R)-5,10-methylene-5,6,7,8-tetrahydrofolate + NADP(+) = (6R)-5,10-methenyltetrahydrofolate + NADPH. The enzyme catalyses (6R)-5,10-methenyltetrahydrofolate + H2O = (6R)-10-formyltetrahydrofolate + H(+). It participates in one-carbon metabolism; tetrahydrofolate interconversion. In terms of biological role, catalyzes the oxidation of 5,10-methylenetetrahydrofolate to 5,10-methenyltetrahydrofolate and then the hydrolysis of 5,10-methenyltetrahydrofolate to 10-formyltetrahydrofolate. The polypeptide is Bifunctional protein FolD (Staphylococcus saprophyticus subsp. saprophyticus (strain ATCC 15305 / DSM 20229 / NCIMB 8711 / NCTC 7292 / S-41)).